The following is a 439-amino-acid chain: General transcription factor IIE subunit 1 (439 aa).

An N-acetylalanine modification is found at A2. Residues 14-104 form the HTH TFE/IIEalpha-type domain; the sequence is LKRLAKYVIR…NYRTLVNVVK (91 aa). K67 carries the post-translational modification N6-acetyllysine. The Zn(2+) site is built by C129, C132, C154, and C157. A C4-type zinc finger spans residues 129–157; sequence CPVCSSTFTDLEANQLFDPMTGTFRCTFC. Residue S268 is modified to Phosphoserine. Positions 333-344 are enriched in low complexity; sequence SSAMAGSVGAAA. A disordered region spans residues 333–392; it reads SSAMAGSVGAAAPVTTANGSDSESETSESDDDSPPRPAAVAVHKREEDEEEDDEFEEVAD. 2 stretches are compositionally biased toward acidic residues: residues 354–364 and 379–392; these read SESETSESDDD and EDEE…EVAD.

Belongs to the TFIIE alpha subunit family. As to quaternary structure, tetramer of two alpha and two beta chains. Interacts with TAF6/TAFII80. Interacts with ATF7IP. Interacts with SND1. Part of TBP-based Pol II pre-initiation complex (PIC), in which Pol II core assembles with general transcription factors and other specific initiation factors including GTF2E1, GTF2E2, GTF2F1, GTF2F2, TCEA1, ERCC2, ERCC3, GTF2H2, GTF2H3, GTF2H4, GTF2H5, GTF2A1, GTF2A2, GTF2B and TBP; this large multi-subunit PIC complex mediates DNA unwinding and targets Pol II core to the transcription start site where the first phosphodiester bond forms.

It localises to the nucleus. Recruits TFIIH to the initiation complex and stimulates the RNA polymerase II C-terminal domain kinase and DNA-dependent ATPase activities of TFIIH. Both TFIIH and TFIIE are required for promoter clearance by RNA polymerase. The sequence is that of General transcription factor IIE subunit 1 (GTF2E1) from Pongo abelii (Sumatran orangutan).